We begin with the raw amino-acid sequence, 232 residues long: Large ribosomal subunit protein uL1 (232 aa).

The protein belongs to the universal ribosomal protein uL1 family. Part of the 50S ribosomal subunit.

Binds directly to 23S rRNA. The L1 stalk is quite mobile in the ribosome, and is involved in E site tRNA release. In terms of biological role, protein L1 is also a translational repressor protein, it controls the translation of the L11 operon by binding to its mRNA. This Xylella fastidiosa (strain M12) protein is Large ribosomal subunit protein uL1.